A 217-amino-acid chain; its full sequence is N-(5'-phosphoribosyl)anthranilate isomerase (217 aa).

The protein belongs to the TrpF family.

The enzyme catalyses N-(5-phospho-beta-D-ribosyl)anthranilate = 1-(2-carboxyphenylamino)-1-deoxy-D-ribulose 5-phosphate. Its pathway is amino-acid biosynthesis; L-tryptophan biosynthesis; L-tryptophan from chorismate: step 3/5. This Chlorobium luteolum (strain DSM 273 / BCRC 81028 / 2530) (Pelodictyon luteolum) protein is N-(5'-phosphoribosyl)anthranilate isomerase.